We begin with the raw amino-acid sequence, 498 residues long: Sugar transport protein 2 (498 aa).

Residues 1 to 22 (MAVGSMNVEEGTKAFPAKLTGQ) are Cytoplasmic-facing. A run of 12 helical transmembrane segments spans residues 23-43 (VFLC…DIGI), 80-100 (LLQL…FISS), 117-137 (IFFL…MLIG), 140-160 (ILLG…ISEI), 167-187 (GGLN…ASYV), 200-220 (YSLG…FFIH), 288-308 (LQFF…PVLF), 320-340 (ISTV…LLVV), 348-368 (LLME…GILL), 381-401 (AVPL…AWSW), 421-441 (GYFC…QFFL), and 450-470 (LLFF…VFFL). The Cytoplasmic portion of the chain corresponds to 471–498 (PETKGVPIEEMAEKRWKTHPRWKKYFKD).

The protein belongs to the major facilitator superfamily. Sugar transporter (TC 2.A.1.1) family. As to expression, pollen specific (at protein level).

It is found in the membrane. In terms of biological role, mediates an active uptake of hexoses, probably by sugar/hydrogen symport. Can transport glucose, 3-O-methylglucose, xylose, mannose, fructose and galactose. The protein is Sugar transport protein 2 (STP2) of Arabidopsis thaliana (Mouse-ear cress).